An 85-amino-acid chain; its full sequence is Colicin-E6 immunity protein (85 aa).

The protein belongs to the cloacin immunity protein family.

This protein inhibits the 16S RNA hydrolyzing activity of colicin E6 by binding with high affinity to the C-terminal catalytic domain of E6. This protein is able to protect a cell, which harbors the plasmid ColE6 against colicin E6. In Escherichia coli, this protein is Colicin-E6 immunity protein (imm).